We begin with the raw amino-acid sequence, 211 residues long: Large ribosomal subunit protein uL4 (211 aa).

Residues 52-79 (GRAEVHGSNSKPYSQKGTGRARRGDKKS) are disordered. A compositionally biased stretch (polar residues) spans 58 to 68 (GSNSKPYSQKG).

It belongs to the universal ribosomal protein uL4 family. Part of the 50S ribosomal subunit.

Its function is as follows. One of the primary rRNA binding proteins, this protein initially binds near the 5'-end of the 23S rRNA. It is important during the early stages of 50S assembly. It makes multiple contacts with different domains of the 23S rRNA in the assembled 50S subunit and ribosome. Functionally, forms part of the polypeptide exit tunnel. In Treponema denticola (strain ATCC 35405 / DSM 14222 / CIP 103919 / JCM 8153 / KCTC 15104), this protein is Large ribosomal subunit protein uL4.